A 459-amino-acid polypeptide reads, in one-letter code: tRNA modification GTPase MnmE (459 aa).

Arginine 22, glutamate 85, and arginine 124 together coordinate (6S)-5-formyl-5,6,7,8-tetrahydrofolate. The region spanning 221 to 380 is the TrmE-type G domain; the sequence is GLSTVIVGKP…LEIQIRDLFF (160 aa). Asparagine 231 is a K(+) binding site. GTP is bound by residues 231–236, 250–256, and 275–278; these read NVGKSS, TEVAGTT, and DTAG. Serine 235 lines the Mg(2+) pocket. K(+)-binding residues include threonine 250, valine 252, and threonine 255. Position 256 (threonine 256) interacts with Mg(2+). Residue lysine 459 coordinates (6S)-5-formyl-5,6,7,8-tetrahydrofolate.

It belongs to the TRAFAC class TrmE-Era-EngA-EngB-Septin-like GTPase superfamily. TrmE GTPase family. As to quaternary structure, homodimer. Heterotetramer of two MnmE and two MnmG subunits. It depends on K(+) as a cofactor.

Its subcellular location is the cytoplasm. Its function is as follows. Exhibits a very high intrinsic GTPase hydrolysis rate. Involved in the addition of a carboxymethylaminomethyl (cmnm) group at the wobble position (U34) of certain tRNAs, forming tRNA-cmnm(5)s(2)U34. This Staphylococcus aureus (strain MSSA476) protein is tRNA modification GTPase MnmE.